The following is a 24-amino-acid chain: Poly-His-poly-Gly peptide 1 (24 aa).

Over residues E1–G13 the composition is skewed to basic residues. The tract at residues E1–G24 is disordered. Residues V14 to G24 show a composition bias toward gly residues.

In terms of tissue distribution, expressed by the venom gland.

It localises to the secreted. Functionally, may serve as a metalloproteinase inhibitor during glandular storage. Their inhibition may be instantly disengaged, by dilution or physiochemical change, when venom is injected into tissue of the victim. This Atheris chlorechis (Western bush viper) protein is Poly-His-poly-Gly peptide 1.